A 435-amino-acid chain; its full sequence is GTPase Obg (435 aa).

The 159-residue stretch at 1-159 folds into the Obg domain; sequence MAFIDKCKIV…VEVLLELKTI (159 aa). The region spanning 160-329 is the OBG-type G domain; the sequence is ADIGIIGLPN…MLDDVIKIYF (170 aa). GTP contacts are provided by residues 166-173, 191-195, 212-215, 282-285, and 310-312; these read GLPNAGKS, FTTLN, DIPG, NKID, and SAL. 2 residues coordinate Mg(2+): Ser-173 and Thr-193. Residues 357 to 435 enclose the OCT domain; that stretch reads KSKELDKTIE…IYDITLEFEE (79 aa).

This sequence belongs to the TRAFAC class OBG-HflX-like GTPase superfamily. OBG GTPase family. Monomer. Mg(2+) serves as cofactor.

It localises to the cytoplasm. An essential GTPase which binds GTP, GDP and possibly (p)ppGpp with moderate affinity, with high nucleotide exchange rates and a fairly low GTP hydrolysis rate. Plays a role in control of the cell cycle, stress response, ribosome biogenesis and in those bacteria that undergo differentiation, in morphogenesis control. This chain is GTPase Obg, found in Ureaplasma parvum serovar 3 (strain ATCC 27815 / 27 / NCTC 11736).